A 343-amino-acid polypeptide reads, in one-letter code: N(4)-bis(aminopropyl)spermidine synthase (343 aa).

This sequence belongs to the branched-chain polyamine synthase family.

It localises to the cytoplasm. It carries out the reaction 2 S-adenosyl 3-(methylsulfanyl)propylamine + spermidine = N(4)-bis(aminopropyl)spermidine + 2 S-methyl-5'-thioadenosine + 2 H(+). It functions in the pathway amine and polyamine biosynthesis. Its function is as follows. Involved in the biosynthesis of branched-chain polyamines, which support the growth of thermophiles under high-temperature conditions. Catalyzes the sequential condensation of spermidine with the aminopropyl groups of decarboxylated S-adenosylmethionines to produce N(4)-bis(aminopropyl)spermidine via N(4)-aminopropylspermidine. This Thermus thermophilus protein is N(4)-bis(aminopropyl)spermidine synthase.